A 563-amino-acid chain; its full sequence is Germacrene-A synthase (563 aa).

Residues aspartate 316, aspartate 320, aspartate 461, and glutamate 469 each coordinate Mg(2+). Positions 316–320 (DDIYD) match the DDXXD motif motif.

The protein belongs to the terpene synthase family. Tpsa subfamily. Mg(2+) serves as cofactor. Expressed in young leaves. Detected in trichomes and cones.

It catalyses the reaction (2E,6E)-farnesyl diphosphate = (+)-(R)-germacrene A + diphosphate. The protein operates within secondary metabolite biosynthesis; terpenoid biosynthesis. Sesquiterpene synthase that catalyzes the formation of germacrene A. Can use farnesyl diphosphate as substrate, but not geranyl diphosphate or geranylgeranyl diphosphate. Beta-elemene, the initially measured product in the assay, is derived nonenzymatically from germacrene A. This Humulus lupulus (European hop) protein is Germacrene-A synthase.